The primary structure comprises 198 residues: uncharacterized protein (198 aa).

A disordered region spans residues 1–23 (MYFGKTRQSDQSGRVPPNQNVTT). Polar residues predominate over residues 9–23 (SDQSGRVPPNQNVTT). Cysteine 75, histidine 144, and arginine 149 together coordinate Mo-molybdopterin.

It depends on Mo-molybdopterin as a cofactor.

This is an uncharacterized protein from Bacillus subtilis (strain 168).